The chain runs to 348 residues: Erlin-1 (348 aa).

Residues Met-1–Arg-7 lie on the Cytoplasmic side of the membrane. The chain crosses the membrane as a helical span at residues Val-8–Ile-28. The Lumenal segment spans residues Glu-29–Gly-348. N-linked (GlcNAc...) asparagine glycosylation is present at Asn-108. Residue Lys-269 is modified to N6-acetyllysine. Residues Thr-321–Leu-333 show a composition bias toward basic and acidic residues. Residues Thr-321 to Gly-348 form a disordered region. Positions Asn-339–Gly-348 are enriched in polar residues.

This sequence belongs to the band 7/mec-2 family. Forms a heteromeric complex with ERLIN2. In complex with ERLIN2, interacts with RNF170. Interacts with AMFR and SYVN1. Deubiquitinated by USP25; leading to stabilization.

It localises to the endoplasmic reticulum membrane. Component of the ERLIN1/ERLIN2 complex which mediates the endoplasmic reticulum-associated degradation (ERAD) of inositol 1,4,5-trisphosphate receptors (IP3Rs). Involved in regulation of cellular cholesterol homeostasis by regulation the SREBP signaling pathway. Binds cholesterol and may promote ER retention of the SCAP-SREBF complex. The protein is Erlin-1 of Pongo abelii (Sumatran orangutan).